The chain runs to 606 residues: Aspartate--tRNA(Asp/Asn) ligase (606 aa).

L-aspartate is bound at residue Glu-172. Residues 196-199 (QLFK) are aspartate. Arg-218 serves as a coordination point for L-aspartate. Residues 218-220 (RDE) and Gln-227 contribute to the ATP site. His-448 contributes to the L-aspartate binding site. ATP is bound at residue Glu-482. Arg-489 contacts L-aspartate. 534–537 (GWDR) is an ATP binding site.

The protein belongs to the class-II aminoacyl-tRNA synthetase family. Type 1 subfamily. In terms of assembly, homodimer.

The protein resides in the cytoplasm. The catalysed reaction is tRNA(Asx) + L-aspartate + ATP = L-aspartyl-tRNA(Asx) + AMP + diphosphate. Aspartyl-tRNA synthetase with relaxed tRNA specificity since it is able to aspartylate not only its cognate tRNA(Asp) but also tRNA(Asn). Reaction proceeds in two steps: L-aspartate is first activated by ATP to form Asp-AMP and then transferred to the acceptor end of tRNA(Asp/Asn). In Saccharopolyspora erythraea (strain ATCC 11635 / DSM 40517 / JCM 4748 / NBRC 13426 / NCIMB 8594 / NRRL 2338), this protein is Aspartate--tRNA(Asp/Asn) ligase.